A 259-amino-acid chain; its full sequence is Type III pantothenate kinase (259 aa).

6 to 13 (DCGNTNTV) is a binding site for ATP. Substrate is bound at residue 107–110 (GPDR). Asp-109 (proton acceptor) is an active-site residue. Residue Asp-129 coordinates K(+). Position 132 (Thr-132) interacts with ATP. Thr-184 serves as a coordination point for substrate.

Belongs to the type III pantothenate kinase family. Homodimer. NH4(+) is required as a cofactor. The cofactor is K(+).

Its subcellular location is the cytoplasm. The catalysed reaction is (R)-pantothenate + ATP = (R)-4'-phosphopantothenate + ADP + H(+). It functions in the pathway cofactor biosynthesis; coenzyme A biosynthesis; CoA from (R)-pantothenate: step 1/5. In terms of biological role, catalyzes the phosphorylation of pantothenate (Pan), the first step in CoA biosynthesis. The sequence is that of Type III pantothenate kinase from Jannaschia sp. (strain CCS1).